The chain runs to 267 residues: Tetrahydromethanopterin S-methyltransferase subunit C (267 aa).

The next 8 membrane-spanning stretches (helical) occupy residues L18–V38, I39–I59, Y76–V96, I99–L119, I138–T158, L163–I183, F209–V229, and S230–E250.

The protein belongs to the MtrC family. In terms of assembly, the complex is composed of 8 subunits; MtrA, MtrB, MtrC, MtrD, MtrE, MtrF, MtrG and MtrH.

Its subcellular location is the cell membrane. The catalysed reaction is 5-methyl-5,6,7,8-tetrahydromethanopterin + coenzyme M + 2 Na(+)(in) = 5,6,7,8-tetrahydromethanopterin + methyl-coenzyme M + 2 Na(+)(out). Its pathway is one-carbon metabolism; methanogenesis from CO(2); methyl-coenzyme M from 5,10-methylene-5,6,7,8-tetrahydromethanopterin: step 2/2. Its function is as follows. Part of a complex that catalyzes the formation of methyl-coenzyme M and tetrahydromethanopterin from coenzyme M and methyl-tetrahydromethanopterin. This is an energy-conserving, sodium-ion translocating step. This chain is Tetrahydromethanopterin S-methyltransferase subunit C, found in Methanothermobacter marburgensis (strain ATCC BAA-927 / DSM 2133 / JCM 14651 / NBRC 100331 / OCM 82 / Marburg) (Methanobacterium thermoautotrophicum).